The chain runs to 600 residues: Elongation factor 4 (600 aa).

In terms of domain architecture, tr-type G spans 13 to 194 (DRIRNFCIIA…AIVERIPPPR (182 aa)). GTP-binding positions include 25 to 30 (DHGKST) and 141 to 144 (NKID).

This sequence belongs to the TRAFAC class translation factor GTPase superfamily. Classic translation factor GTPase family. LepA subfamily.

Its subcellular location is the cell membrane. The enzyme catalyses GTP + H2O = GDP + phosphate + H(+). Required for accurate and efficient protein synthesis under certain stress conditions. May act as a fidelity factor of the translation reaction, by catalyzing a one-codon backward translocation of tRNAs on improperly translocated ribosomes. Back-translocation proceeds from a post-translocation (POST) complex to a pre-translocation (PRE) complex, thus giving elongation factor G a second chance to translocate the tRNAs correctly. Binds to ribosomes in a GTP-dependent manner. In Rubrobacter xylanophilus (strain DSM 9941 / JCM 11954 / NBRC 16129 / PRD-1), this protein is Elongation factor 4.